The primary structure comprises 619 residues: Glucokinase regulatory protein (619 aa).

2 SIS domains span residues 90–283 (VQEV…AESN) and 319–498 (TATS…LRGK). 107–109 (CGT) provides a ligand contact to keto-D-fructose 6-phosphate. Beta-D-fructose 1-phosphate is bound by residues 109–110 (TS), glutamate 153, 179–181 (SCG), and glutamate 347. Residues 179–183 (SCGLS) and glutamate 347 each bind keto-D-fructose 6-phosphate. Positions 462-464 (ILF) are essential for interaction with GCK. Lysine 513 provides a ligand contact to keto-D-fructose 6-phosphate. Lysine 513 is a beta-D-fructose 1-phosphate binding site.

It belongs to the GCKR family. Interacts (fructose 6-phosphate bound form) with gck.

The protein resides in the nucleus. Its subcellular location is the cytoplasm. It localises to the mitochondrion. In terms of biological role, regulates glucokinase (gck) by forming an inactive complex with this enzyme. The affinity of gckr for gck is modulated by fructose metabolites: gckr with bound fructose 6-phosphate has increased affinity for gck, while gckr with bound fructose 1-phosphate has strongly decreased affinity for gck and does not inhibit gck activity. This is Glucokinase regulatory protein from Xenopus laevis (African clawed frog).